A 188-amino-acid chain; its full sequence is Protein TIFY 9 (188 aa).

Residues Asp-20–Gly-41 form a disordered region. The segment covering Ser-28–Ser-38 has biased composition (low complexity). Residues Ala-80–Glu-114 form the Tify domain. The short motif at Pro-135–Gln-160 is the Jas element. The disordered stretch occupies residues Leu-156–Ser-188. Positions Leu-179–Ser-188 are enriched in basic and acidic residues.

It belongs to the TIFY/JAZ family. In terms of processing, ubiquitinated. Targeted for degradation by the SCF(COI1) E3 ubiquitin ligase-proteasome pathway during jasmonate signaling.

Repressor of jasmonate responses. In Oryza sativa subsp. indica (Rice), this protein is Protein TIFY 9.